Consider the following 185-residue polypeptide: Ribosome-recycling factor (185 aa).

This sequence belongs to the RRF family.

It is found in the cytoplasm. Responsible for the release of ribosomes from messenger RNA at the termination of protein biosynthesis. May increase the efficiency of translation by recycling ribosomes from one round of translation to another. This Mycolicibacterium vanbaalenii (strain DSM 7251 / JCM 13017 / BCRC 16820 / KCTC 9966 / NRRL B-24157 / PYR-1) (Mycobacterium vanbaalenii) protein is Ribosome-recycling factor.